Reading from the N-terminus, the 620-residue chain is MSQQKKGIGLLVSAIGVVFGDIGTSPLYALKETFAGHHPIPVTPDNIFGVLSLVFWTVMLLVTVKYVIVIMRADNHGEGGSLALLALVTELTRGRRVHYPLMMLGVIAAALFYGDSMITPAISVLSAVEGLEVVTPDLKAYVVPITAVVLTLLFAIQSRGTGLVGRLFGPVMCMWFLTLALLGIANIVHAPEVLEAISPTFAIEFVFRHPLMSFYALGSVVLAVTGGEALYTDMGHFGRFPIRLAWFGLVLPALLLNYFGQGALLIHDPSAIQNPFFRLGPEWMVVPMVALATLATVIASQAVISGAYSVARQAIQLGLLPRMTIVHTSGEEAGQIYVPFTNWTLYFAVMALVVGFQSSSNLAAAYGIAVTGTMMIDTILVSFVAALLWRWHPVVVAVVIGTLLLLDFAFFAANIIKVAQGGWFPLFIGFISFTVLTTWRRGRALVRKQLKKQAVPLDVVLRALGPNVSRARGTAVFLTAATDGVPPALLHNLKHNQTVHQRVILTTVSTAETPYVPDSERVHMTDIGDGFHRLIIRYGFMQTPDVPAALSLCKQFGHEFNMMSTSFFLSRETYVPSLNPGMALWRERLFTFMTLNATRATTFFKIPTDRVVELGTQLEI.

12 consecutive transmembrane segments (helical) span residues 7–27, 50–70, 102–122, 136–156, 168–188, 211–231, 246–266, 284–304, 336–356, 368–388, 393–413, and 415–435; these read GIGL…TSPL, VLSL…VIVI, MMLG…TPAI, PDLK…LFAI, FGPV…ANIV, LMSF…EALY, WFGL…ALLI, MVVP…QAVI, IYVP…VVGF, IAVT…AALL, PVVV…FFAA, and IIKV…SFTV.

The protein belongs to the HAK/KUP transporter (TC 2.A.72) family.

It localises to the cell inner membrane. It catalyses the reaction K(+)(in) + H(+)(in) = K(+)(out) + H(+)(out). Functionally, transport of potassium into the cell. Likely operates as a K(+):H(+) symporter. In Rhodopseudomonas palustris (strain ATCC BAA-98 / CGA009), this protein is Probable potassium transport system protein Kup 1.